Consider the following 220-residue polypeptide: Polyadenylate-binding protein 2 (220 aa).

The interval 1 to 24 (MEEEEHEVYGGEIPDVGEMDGDME) is disordered. A coiled-coil region spans residues 34-74 (AADDDAVKELDEMKKRLKEMEDEAAALREMQAKVEKEMGAQ). Residues 78 to 219 (SIAANQAGKE…FRRPMRYMPY (142 aa)) are necessary for homooligomerization. Residues 92–168 (RSVFVGNVDY…RQLKVLQKRT (77 aa)) enclose the RRM domain. The Nuclear localization signal motif lies at 165 to 172 (QKRTNVPG).

In terms of assembly, monomer and homooligomer. Binds RNA as a monomer and oligomerizes when bound to poly(A). Forms a complex with cleavage and polyadenylation specificity factor (CPSF) subunits PAPS2, FIPS5, PABN3 and PABN1. Interacts with CSP3.

The protein localises to the nucleus speckle. The protein resides in the cytoplasm. Its function is as follows. Involved in the 3'-end formation of mRNA precursors (pre-mRNA) by the addition of a poly(A) tail of 200-250 nt to the upstream cleavage product. Stimulates poly(A) polymerase (PAPOLA) conferring processivity on the poly(A) tail elongation reaction and also controls the poly(A) tail length. Increases the affinity of poly(A) polymerase for RNA. Binds to poly(A) and to poly(G) with high affinity. May protect the poly(A) tail from degradation. In Arabidopsis thaliana (Mouse-ear cress), this protein is Polyadenylate-binding protein 2.